The primary structure comprises 122 residues: Ig heavy chain V region M511 (122 aa).

The Ig-like domain maps to 1–114 (EVKLVESGGG…SYWYFDVWGA (114 aa)).

In Mus musculus (Mouse), this protein is Ig heavy chain V region M511.